The primary structure comprises 449 residues: Probable D-serine dehydratase (449 aa).

Residue Lys-119 is modified to N6-(pyridoxal phosphate)lysine.

This sequence belongs to the serine/threonine dehydratase family. DsdA subfamily. Pyridoxal 5'-phosphate is required as a cofactor.

The catalysed reaction is D-serine = pyruvate + NH4(+). The chain is Probable D-serine dehydratase from Pseudomonas putida (strain ATCC 700007 / DSM 6899 / JCM 31910 / BCRC 17059 / LMG 24140 / F1).